The following is a 266-amino-acid chain: Undecaprenyl-diphosphatase (266 aa).

8 helical membrane passes run 1 to 21 (MTLF…FLPI), 39 to 59 (QGLA…MIYF), 87 to 107 (WYVI…KGWI), 113 to 133 (TALV…YADA), 143 to 163 (GLTL…LIPG), 187 to 207 (FSFL…TLDL), 218 to 238 (ALLY…YLFL), and 244 to 264 (IGML…LWFV).

It belongs to the UppP family.

The protein localises to the cell inner membrane. It carries out the reaction di-trans,octa-cis-undecaprenyl diphosphate + H2O = di-trans,octa-cis-undecaprenyl phosphate + phosphate + H(+). Functionally, catalyzes the dephosphorylation of undecaprenyl diphosphate (UPP). Confers resistance to bacitracin. The polypeptide is Undecaprenyl-diphosphatase (Alteromonas mediterranea (strain DSM 17117 / CIP 110805 / LMG 28347 / Deep ecotype)).